We begin with the raw amino-acid sequence, 418 residues long: Serine proteinase inhibitor 2.4 (418 aa).

The N-terminal stretch at 1 to 28 (MAFIAALGIFMAGICPAVLCFPNGTLGR) is a signal peptide. N-linked (GlcNAc...) asparagine glycosylation is found at Asn23, Asn38, Asn104, and Asn269.

The protein belongs to the serpin family.

It is found in the secreted. The polypeptide is Serine proteinase inhibitor 2.4 (Apodemus sylvaticus (European woodmouse)).